A 490-amino-acid chain; its full sequence is Ketol-acid reductoisomerase (NADP(+)) (490 aa).

A KARI N-terminal Rossmann domain is found at 17–208; sequence LAQCEFMNAD…GGHRAGVLKS (192 aa). NADP(+)-binding positions include 45 to 48, Arg68, Arg76, Ser78, and 108 to 110; these read CGAQ and DKQ. The active site involves His132. Gly158 provides a ligand contact to NADP(+). KARI C-terminal knotted domains follow at residues 209–353 and 355–486; these read SFIA…AEQE and FDNG…MSAM. Mg(2+)-binding residues include Asp217, Glu221, Glu389, and Glu393. Residue Ser414 coordinates substrate.

This sequence belongs to the ketol-acid reductoisomerase family. Requires Mg(2+) as cofactor.

It catalyses the reaction (2R)-2,3-dihydroxy-3-methylbutanoate + NADP(+) = (2S)-2-acetolactate + NADPH + H(+). The enzyme catalyses (2R,3R)-2,3-dihydroxy-3-methylpentanoate + NADP(+) = (S)-2-ethyl-2-hydroxy-3-oxobutanoate + NADPH + H(+). It participates in amino-acid biosynthesis; L-isoleucine biosynthesis; L-isoleucine from 2-oxobutanoate: step 2/4. Its pathway is amino-acid biosynthesis; L-valine biosynthesis; L-valine from pyruvate: step 2/4. Its function is as follows. Involved in the biosynthesis of branched-chain amino acids (BCAA). Catalyzes an alkyl-migration followed by a ketol-acid reduction of (S)-2-acetolactate (S2AL) to yield (R)-2,3-dihydroxy-isovalerate. In the isomerase reaction, S2AL is rearranged via a Mg-dependent methyl migration to produce 3-hydroxy-3-methyl-2-ketobutyrate (HMKB). In the reductase reaction, this 2-ketoacid undergoes a metal-dependent reduction by NADPH to yield (R)-2,3-dihydroxy-isovalerate. In Pseudoalteromonas translucida (strain TAC 125), this protein is Ketol-acid reductoisomerase (NADP(+)).